The sequence spans 465 residues: Putrescine aminotransferase (465 aa).

Residues 150 to 151 (GT) and Q274 contribute to the pyridoxal 5'-phosphate site. At K300 the chain carries N6-(pyridoxal phosphate)lysine. T332 contributes to the pyridoxal 5'-phosphate binding site.

Belongs to the class-III pyridoxal-phosphate-dependent aminotransferase family. Putrescine aminotransferase subfamily. Pyridoxal 5'-phosphate serves as cofactor.

It catalyses the reaction an alkane-alpha,omega-diamine + 2-oxoglutarate = an omega-aminoaldehyde + L-glutamate. The catalysed reaction is putrescine + 2-oxoglutarate = 1-pyrroline + L-glutamate + H2O. It carries out the reaction cadaverine + 2-oxoglutarate = 5-aminopentanal + L-glutamate. It functions in the pathway amine and polyamine degradation; putrescine degradation; 4-aminobutanal from putrescine (transaminase route): step 1/1. In terms of biological role, catalyzes the aminotransferase reaction from putrescine to 2-oxoglutarate, leading to glutamate and 4-aminobutanal, which spontaneously cyclizes to form 1-pyrroline. This is the first step in one of two pathways for putrescine degradation, where putrescine is converted into 4-aminobutanoate (gamma-aminobutyrate or GABA) via 4-aminobutanal. Also functions as a cadaverine transaminase in a a L-lysine degradation pathway to succinate that proceeds via cadaverine, glutarate and L-2-hydroxyglutarate. The protein is Putrescine aminotransferase of Cronobacter sakazakii (strain ATCC BAA-894) (Enterobacter sakazakii).